The chain runs to 296 residues: GTPase Era (296 aa).

The 167-residue stretch at 7 to 173 folds into the Era-type G domain; that stretch reads KAGFVSIIGR…VDLVREHLPE (167 aa). The segment at 15 to 22 is G1; it reads GRPNVGKS. 15–22 is a GTP binding site; the sequence is GRPNVGKS. The G2 stretch occupies residues 41-45; sequence QTTRN. Positions 62-65 are G3; it reads DTPG. GTP contacts are provided by residues 62 to 66 and 122 to 125; these read DTPGI and NKID. A G4 region spans residues 122 to 125; the sequence is NKID. The segment at 152–154 is G5; it reads ISA. A KH type-2 domain is found at 204-281; the sequence is TNREVPYGTA…YLELFVQVQE (78 aa).

Belongs to the TRAFAC class TrmE-Era-EngA-EngB-Septin-like GTPase superfamily. Era GTPase family. In terms of assembly, monomer.

The protein resides in the cytoplasm. It is found in the cell inner membrane. Functionally, an essential GTPase that binds both GDP and GTP, with rapid nucleotide exchange. Plays a role in 16S rRNA processing and 30S ribosomal subunit biogenesis and possibly also in cell cycle regulation and energy metabolism. In Trichlorobacter lovleyi (strain ATCC BAA-1151 / DSM 17278 / SZ) (Geobacter lovleyi), this protein is GTPase Era.